The sequence spans 491 residues: Glutamyl-tRNA(Gln) amidotransferase subunit A (491 aa).

Active-site charge relay system residues include lysine 76 and serine 154. The active-site Acyl-ester intermediate is serine 178.

This sequence belongs to the amidase family. GatA subfamily. As to quaternary structure, heterotrimer of A, B and C subunits.

The enzyme catalyses L-glutamyl-tRNA(Gln) + L-glutamine + ATP + H2O = L-glutaminyl-tRNA(Gln) + L-glutamate + ADP + phosphate + H(+). Its function is as follows. Allows the formation of correctly charged Gln-tRNA(Gln) through the transamidation of misacylated Glu-tRNA(Gln) in organisms which lack glutaminyl-tRNA synthetase. The reaction takes place in the presence of glutamine and ATP through an activated gamma-phospho-Glu-tRNA(Gln). The chain is Glutamyl-tRNA(Gln) amidotransferase subunit A from Cereibacter sphaeroides (strain ATCC 17025 / ATH 2.4.3) (Rhodobacter sphaeroides).